Reading from the N-terminus, the 242-residue chain is Small ribosomal subunit protein uS2 (242 aa).

The protein belongs to the universal ribosomal protein uS2 family.

This chain is Small ribosomal subunit protein uS2, found in Aliivibrio fischeri (strain ATCC 700601 / ES114) (Vibrio fischeri).